Consider the following 103-residue polypeptide: Small ribosomal subunit protein uS10 (103 aa).

Belongs to the universal ribosomal protein uS10 family. Part of the 30S ribosomal subunit.

Functionally, involved in the binding of tRNA to the ribosomes. This is Small ribosomal subunit protein uS10 from Novosphingobium aromaticivorans (strain ATCC 700278 / DSM 12444 / CCUG 56034 / CIP 105152 / NBRC 16084 / F199).